A 78-amino-acid chain; its full sequence is Chassatide C4 (78 aa).

Positions 1-23 are cleaved as a signal peptide; that stretch reads MAKFATQLFLLTASVVMLEVQSS. The propeptide at 24-42 is removed in mature form; it reads IVIMQDPDLGRKLIMNPAN. Positions 43 to 71 form a cross-link, cyclopeptide (Gly-Asn); it reads GASCGETCFTGICFTAGCSCNPWPTCTRN. Cystine bridges form between C46–C60, C50–C62, and C55–C68. The propeptide at 72–78 is removed in mature form; the sequence is GLNPESI.

Post-translationally, this is a cyclic peptide.

In terms of biological role, probably participates in a plant defense mechanism. The chain is Chassatide C4 from Chassalia chartacea (Chassalia curviflora).